The primary structure comprises 313 residues: UDP-N-acetylglucosamine 3-dehydrogenase (313 aa).

Residues H13, L14, and R38 each coordinate NAD(+).

This sequence belongs to the Gfo/Idh/MocA family. Exists in multiple oligomeric states.

It carries out the reaction UDP-N-acetyl-alpha-D-glucosamine + NAD(+) = UDP-2-acetamido-3-dehydro-2-deoxy-alpha-D-glucopyranose + NADH + H(+). It participates in bacterial outer membrane biogenesis; LPS lipid A biosynthesis. Its function is as follows. Oxidoreductase involved in the synthesis of 2,3-diamino-2,3-dideoxy-D-glucopyranose (GlcN3N), which is a component of lipid A in some species. Catalyzes the NAD(+)-dependent oxidation of the glucosamine 3-position of UDP-N-acetyl-glucosamine (UDP-GlcNAc) to a ketone moiety, forming UDP-2-acetamido-3-dehydro-2-deoxy-alpha-D-glucopyranose (UDP-3-oxo-GlcNAc). Is specific for UDP-GlcNAc, no activity is observed with UDP-glucose (UDP-Glc), UDP-glucoronic acid (UDP-GlcA), UDP-galactose (UDP-Gal) and UDP-N-acetylgalactosamine (UDP-GalNAc). Cannot use FAD(+) and NADP(+). This Acidithiobacillus ferrooxidans (strain ATCC 23270 / DSM 14882 / CIP 104768 / NCIMB 8455) (Ferrobacillus ferrooxidans (strain ATCC 23270)) protein is UDP-N-acetylglucosamine 3-dehydrogenase.